We begin with the raw amino-acid sequence, 375 residues long: Naringenin 7-O-methyltransferase (375 aa).

136 to 142 (LNLDKVF) serves as a coordination point for substrate. Residues 168 to 188 (LFQYLGQDGNEPSNTLFNQAM) form a substrate binding region. Gly219, Asp242, Met263, and Lys276 together coordinate S-adenosyl-L-methionine. The active-site Proton acceptor is the His280.

This sequence belongs to the class I-like SAM-binding methyltransferase superfamily. Cation-independent O-methyltransferase family. COMT subfamily.

It carries out the reaction (2S)-naringenin + S-adenosyl-L-methionine = (2S)-sakuranetin + S-adenosyl-L-homocysteine + H(+). S-adenosyl-L-methionine-dependent methyltransferase involved in the biosynthesis of the sakuranetin, an inducible defense mechanism of O.sativa against pathogen attack. The sequence is that of Naringenin 7-O-methyltransferase from Oryza sativa subsp. japonica (Rice).